Reading from the N-terminus, the 209-residue chain is Uridine kinase (209 aa).

12 to 19 contacts ATP; it reads GGSGSGKT.

This sequence belongs to the uridine kinase family.

Its subcellular location is the cytoplasm. It carries out the reaction uridine + ATP = UMP + ADP + H(+). It catalyses the reaction cytidine + ATP = CMP + ADP + H(+). The protein operates within pyrimidine metabolism; CTP biosynthesis via salvage pathway; CTP from cytidine: step 1/3. It functions in the pathway pyrimidine metabolism; UMP biosynthesis via salvage pathway; UMP from uridine: step 1/1. The sequence is that of Uridine kinase from Listeria monocytogenes serotype 4b (strain CLIP80459).